An 876-amino-acid chain; its full sequence is MGDSDDEYDRRRRDKFRRERSDYDRSRERDERRRGDDWNDREWDRGRERRSRGEYRDYDRNRRERFSPPRHELSPPQKRMRRDWDEHSSDPYHSGYEMPYAGGGGGPAYGPPQPWGHPDVHIVQHPVLPIQARLGSIAEIDLGVPPPVMKTFKEFLLSLDDAVDETEAVKRYNDYKLDFRRQQMQDFFLAHKDEEWFRSKYHPDEVGKRRQEARGALQNRLRVFLSLMESGWFDNLLLDIDKADAIVKMLDAAVIKMEGGTENDLRILEQEEEEEQAGKPGEPNKKEESRVGPGLGDGERKANEKDDKKEDGKQAENESSSDDKIKKSEGDGDKEEKKEDSEKEAKKSSKKRNRKHSGDDSFDEGSVSESESESESGQAEEEKEEADETLKEKEKPKEEEREKPKDAPGLECKPRPLHKTCSLFMRNIAPNISRAEIISLCKRYPGFMRVALSEPQPERRFFRRGWVTFDRSVNIKEICWNLQNIRLRECELSPGVNRDLTRRVRNINGITQHKQIVRNDIKLAAKLVHTLDDRTQLWAPEPGTPALPASLPSQNPILKNITDYLIEEVSAEEEELLGSSGGAPPEEPPKEGNPAEINVERDEKLIKVLDKLLLYLRIVHSLDYYNTCEYPNEDEMPNRCGIIHVRGPMPPNRISHGEVLEWQKTFEEKLTPLLSVRESLSEEEAQKMGRKDPEQEVEKFVTSNTQELGKDKWLCPLSGKKFKGPEFVRKHIFNKHAEKIEEVKKEVAFFNNFLTDAKRPALPEIKPAQPPGPAQILPPGLTPGLPYPHQTPQGLMPYGQPRPPILGYGAGAVRPAVPTGGPPYPHAPYGAGRGNYDAFRGQGGYPGKPRNRMVRGDPRAIVEYRDLDAPDDVDFF.

A disordered region spans residues 1–90 (MGDSDDEYDR…RRDWDEHSSD (90 aa)). G2 is subject to N-acetylglycine. S4 is subject to Phosphoserine. A Phosphotyrosine modification is found at Y8. Residues 8-73 (YDRRRRDKFR…ERFSPPRHEL (66 aa)) are compositionally biased toward basic and acidic residues. S67, S74, and S136 each carry phosphoserine. K150 participates in a covalent cross-link: Glycyl lysine isopeptide (Lys-Gly) (interchain with G-Cter in SUMO2). Residues 272–413 (EEEEQAGKPG…PKDAPGLECK (142 aa)) are disordered. Residues 297 to 347 (DGERKANEKDDKKEDGKQAENESSSDDKIKKSEGDGDKEEKKEDSEKEAKK) are compositionally biased toward basic and acidic residues. The segment covering 370–387 (SESESESGQAEEEKEEAD) has biased composition (acidic residues). Basic and acidic residues predominate over residues 388–413 (ETLKEKEKPKEEEREKPKDAPGLECK). S493 is subject to Phosphoserine. At T544 the chain carries Phosphothreonine. A Phosphoserine modification is found at S570. A disordered region spans residues 575 to 597 (ELLGSSGGAPPEEPPKEGNPAEI). T671 bears the Phosphothreonine mark. S679 bears the Phosphoserine mark. R833, R840, and R850 each carry omega-N-methylarginine. The tract at residues 835 to 854 (NYDAFRGQGGYPGKPRNRMV) is disordered.

Belongs to the ARS2 family. Interacts with CASP8AP2, ERBB4, NCBP1/CBP80 and DROSHA. Interacts with LUZP4. Interacts with NCBP2/CBP20 and NCBP3. Interacts with MTREX.

The protein resides in the nucleus. It localises to the nucleoplasm. It is found in the cytoplasm. In terms of biological role, acts as a mediator between the cap-binding complex (CBC) and the primary microRNAs (miRNAs) processing machinery during cell proliferation. Contributes to the stability and delivery of capped primary miRNA transcripts to the primary miRNA processing complex containing DGCR8 and DROSHA, thereby playing a role in RNA-mediated gene silencing (RNAi) by miRNAs. Binds capped RNAs (m7GpppG-capped RNA); however interaction is probably mediated via its interaction with NCBP1/CBP80 component of the CBC complex. Involved in cell cycle progression at S phase. Does not directly confer arsenite resistance but rather modulates arsenic sensitivity. Independently of its activity on miRNAs, necessary and sufficient to promote neural stem cell self-renewal. Does so by directly binding SOX2 promoter and positively regulating its transcription. This is Serrate RNA effector molecule homolog (SRRT) from Bos taurus (Bovine).